Consider the following 569-residue polypeptide: MSLLVKAALILKCASMLQGVSAQYFCRDTTFDKRTLESVRFESECIPTVNKRDLDPNAEGVYKRSFDGNMNPSDFQLLPLAPRDGAIVNVDKESFSKRSTTNMFDFNFSCYFGSDGHSNDTLCQQYIDVADSVGEQFSRVLNLNTPIVIDVTVVGACTGESVCSQGQGMVAGSIGGEASPSREIPMACSDGLTRYYPQAVVKQLGLSDPPSYADSDITIALNADANFYFGSGDMGYEAVDLAYVLFHEITHGLGFSTGWGVFGYENLTDPYMNALLPTVSYVIGEMNGETMYAFHDVIENAFDRNIFYSIDPNEGLPTIAEFFHSVGAAFTLKADSIAGVVAQMNDTTTQFHIQANEAYRKAINPGRLVIYPDAGIDTYSPFIYLDSSYVPFSSGSSLSHVALHHYDCEPNFLMRAFYTAGATLESYIECAYGSDQADVAYGPIGPAMRTVFRRMGYSVNNLTGVTNEYSESLAKRSLSEKPKTAPTGKQLALHPLRRETSILDSTNTTSTNATNTTTTTSSSSTASSSASASSSTSATSGAAGDLFSVSKNLMMTLTAGLCLITASLF.

Positions 1 to 22 are cleaved as a signal peptide; sequence MSLLVKAALILKCASMLQGVSA. Residues 498-541 form a disordered region; that stretch reads RETSILDSTNTTSTNATNTTTTTSSSSTASSSASASSSTSATSG. A compositionally biased stretch (low complexity) spans 505 to 540; that stretch reads STNTTSTNATNTTTTTSSSSTASSSASASSSTSATS.

The protein localises to the secreted. It is found in the cell surface. This is an uncharacterized protein from Schizosaccharomyces pombe (strain 972 / ATCC 24843) (Fission yeast).